Consider the following 216-residue polypeptide: GTP cyclohydrolase 1 (216 aa).

Zn(2+) contacts are provided by cysteine 109, histidine 112, and cysteine 180.

It belongs to the GTP cyclohydrolase I family. As to quaternary structure, homomer.

The enzyme catalyses GTP + H2O = 7,8-dihydroneopterin 3'-triphosphate + formate + H(+). The protein operates within cofactor biosynthesis; 7,8-dihydroneopterin triphosphate biosynthesis; 7,8-dihydroneopterin triphosphate from GTP: step 1/1. This is GTP cyclohydrolase 1 from Tolumonas auensis (strain DSM 9187 / NBRC 110442 / TA 4).